A 438-amino-acid chain; its full sequence is MVDYQGKKVVIIGLGLTGLSCVDFFIARGVTPRVMDTRINPPGLDQLPESVEQHVGDLNQEWLLDADLIVVSPGMALAHPALSEAAEAGVEIIGDIELFCRENQAPVVAITGSNGKSTVTTLVGEMAKAAGWSVGGGGNIGVPALTLLKQDNQLTVLELSSFQLETTHSLRASAATILNVTEDHTDRYPLGLQQYRAAKLRVYENAKVCVVNADDALTMPVRGADSRCISFGVDVGDYHLNKQQGEIWLRVRGEKVLNTREMKLSGRHNYTNALAALALADAVGIPRASSLKALTTFSGLPHRFQLVLERHGVRWINDSKATNVGSTEAALDGLQVDGTLHLLLGGDGKSADFSGLTHFLQGDRIKVYCFGRDGGQLAALRPDVSQLTETMAQAMALVAKVVLPGDRVLLSPACASLDQFRSFEHRGNEFARLAEELG.

Residue 112–118 (GSNGKST) coordinates ATP.

Belongs to the MurCDEF family.

It is found in the cytoplasm. The catalysed reaction is UDP-N-acetyl-alpha-D-muramoyl-L-alanine + D-glutamate + ATP = UDP-N-acetyl-alpha-D-muramoyl-L-alanyl-D-glutamate + ADP + phosphate + H(+). It functions in the pathway cell wall biogenesis; peptidoglycan biosynthesis. Cell wall formation. Catalyzes the addition of glutamate to the nucleotide precursor UDP-N-acetylmuramoyl-L-alanine (UMA). The sequence is that of UDP-N-acetylmuramoylalanine--D-glutamate ligase from Yersinia pestis bv. Antiqua (strain Antiqua).